The sequence spans 284 residues: Flavin-dependent thymidylate synthase (284 aa).

Residues 27–237 (GFIRVVDYMG…PLAYNAFVEY (211 aa)) form the ThyX domain. Residues Thr73, 96–98 (RHR), and Glu104 each bind FAD. Residues 93-96 (QWIR) and 104-108 (EYSAR) contribute to the dUMP site. The short motif at 96–106 (RHRTANVNEYS) is the ThyX motif element. Residues 122 to 142 (EQVAKQSDNNKQGSGEAFDPD) form a disordered region. The segment covering 125–134 (AKQSDNNKQG) has biased composition (polar residues). DUMP is bound at residue Arg176. FAD is bound by residues 192–194 (DLH) and His198. Arg203 contacts dUMP. Arg203 acts as the Involved in ionization of N3 of dUMP, leading to its activation in catalysis.

The protein belongs to the thymidylate synthase ThyX family. In terms of assembly, homotetramer. FAD is required as a cofactor.

It carries out the reaction dUMP + (6R)-5,10-methylene-5,6,7,8-tetrahydrofolate + NADPH + H(+) = dTMP + (6S)-5,6,7,8-tetrahydrofolate + NADP(+). It functions in the pathway pyrimidine metabolism; dTTP biosynthesis. Catalyzes the reductive methylation of 2'-deoxyuridine-5'-monophosphate (dUMP) to 2'-deoxythymidine-5'-monophosphate (dTMP) while utilizing 5,10-methylenetetrahydrofolate (mTHF) as the methyl donor, and NADPH and FADH(2) as the reductant. The sequence is that of Flavin-dependent thymidylate synthase from Wolbachia pipientis wMel.